Consider the following 254-residue polypeptide: MWIGVISLFPEMFRAITDYGVTGRAVKKGLLSVQCWNPRDFTHDRHRTVDDRPYGGGPGMLMMVQPLRDAIHAAKAAAGEGAKVIYLSPQGRKLDQQGVCELSVSQKLILVCGRYEGIDERVIQTEIDEEWSIGDYVLSGGELPAMTLIDSISRFVPGVLGDQASAEEDSFVDGLLDCPHYTRPEVLQDMEVPPVLLSGNHAEIRRWRLKQSLGRTWLRRPELLESLALTDEQAKLLTQFRKEHAAQQDHEGCD.

Residues G113 and 133-138 each bind S-adenosyl-L-methionine; that span reads IGDYVL.

Belongs to the RNA methyltransferase TrmD family. In terms of assembly, homodimer.

The protein resides in the cytoplasm. The catalysed reaction is guanosine(37) in tRNA + S-adenosyl-L-methionine = N(1)-methylguanosine(37) in tRNA + S-adenosyl-L-homocysteine + H(+). Functionally, specifically methylates guanosine-37 in various tRNAs. This is tRNA (guanine-N(1)-)-methyltransferase from Edwardsiella ictaluri (strain 93-146).